We begin with the raw amino-acid sequence, 138 residues long: Thioredoxin H2-1 (138 aa).

A disordered region spans residues 1 to 20 (MGGAFSTSKPKPAAGEEGGE). The 118-residue stretch at 12 to 129 (PAAGEEGGES…LEKTINTLRS (118 aa)) folds into the Thioredoxin domain. Active-site nucleophile residues include Cys-55 and Cys-58. An intrachain disulfide couples Cys-55 to Cys-58.

This sequence belongs to the thioredoxin family. Plant H-type subfamily.

Its subcellular location is the cytoplasm. In terms of biological role, probable thiol-disulfide oxidoreductase that may be involved in the redox regulation of a number of cytosolic enzymes. In Oryza sativa subsp. japonica (Rice), this protein is Thioredoxin H2-1.